The following is a 517-amino-acid chain: 2-isopropylmalate synthase (517 aa).

Positions 5–268 (IIIFDTTLRD…DTRINTQEIH (264 aa)) constitute a Pyruvate carboxyltransferase domain. Mn(2+) contacts are provided by Asp14, His202, His204, and Asn238. The segment at 393-517 (SLDVITSQTI…ADLKSHKISQ (125 aa)) is regulatory domain.

It belongs to the alpha-IPM synthase/homocitrate synthase family. LeuA type 1 subfamily. In terms of assembly, homodimer. Requires Mn(2+) as cofactor.

The protein resides in the cytoplasm. The catalysed reaction is 3-methyl-2-oxobutanoate + acetyl-CoA + H2O = (2S)-2-isopropylmalate + CoA + H(+). It participates in amino-acid biosynthesis; L-leucine biosynthesis; L-leucine from 3-methyl-2-oxobutanoate: step 1/4. In terms of biological role, catalyzes the condensation of the acetyl group of acetyl-CoA with 3-methyl-2-oxobutanoate (2-ketoisovalerate) to form 3-carboxy-3-hydroxy-4-methylpentanoate (2-isopropylmalate). The polypeptide is 2-isopropylmalate synthase (Histophilus somni (strain 2336) (Haemophilus somnus)).